Consider the following 228-residue polypeptide: Protein crossbronx homolog (228 aa).

The 155-residue stretch at 14 to 168 folds into the UBC core domain; the sequence is LQEYKILAEY…VEQCVEDSQR (155 aa).

It belongs to the ubiquitin-conjugating enzyme family. FTS subfamily.

The polypeptide is Protein crossbronx homolog (Anopheles gambiae (African malaria mosquito)).